The chain runs to 67 residues: DNA-directed RNA polymerase subunit Rpo10 (67 aa).

The Zn(2+) site is built by C7, C10, C44, and C45.

The protein belongs to the archaeal Rpo10/eukaryotic RPB10 RNA polymerase subunit family. In terms of assembly, part of the RNA polymerase complex. Zn(2+) is required as a cofactor.

The protein localises to the cytoplasm. The catalysed reaction is RNA(n) + a ribonucleoside 5'-triphosphate = RNA(n+1) + diphosphate. DNA-dependent RNA polymerase (RNAP) catalyzes the transcription of DNA into RNA using the four ribonucleoside triphosphates as substrates. The chain is DNA-directed RNA polymerase subunit Rpo10 from Caldivirga maquilingensis (strain ATCC 700844 / DSM 13496 / JCM 10307 / IC-167).